Reading from the N-terminus, the 128-residue chain is Fluoride-specific ion channel FluC (128 aa).

4 consecutive transmembrane segments (helical) span residues 6–26, 36–56, 68–88, and 99–119; these read LVAL…GLVL, LPTF…AGLA, VLLF…GLET, and IAAA…WLGF. The Na(+) site is built by G76 and T79.

This sequence belongs to the fluoride channel Fluc/FEX (TC 1.A.43) family.

It localises to the cell inner membrane. It catalyses the reaction fluoride(in) = fluoride(out). Na(+) is not transported, but it plays an essential structural role and its presence is essential for fluoride channel function. Its function is as follows. Fluoride-specific ion channel. Important for reducing fluoride concentration in the cell, thus reducing its toxicity. The polypeptide is Fluoride-specific ion channel FluC (Methylobacillus flagellatus (strain ATCC 51484 / DSM 6875 / VKM B-1610 / KT)).